Here is a 461-residue protein sequence, read N- to C-terminus: D-phenylhydantoinase (461 aa).

Positions 59, 61, and 151 each coordinate a divalent metal cation. The residue at position 151 (lysine 151) is an N6-carboxylysine. Tyrosine 156 is a substrate binding site. The a divalent metal cation site is built by histidine 182 and histidine 239. Position 286 (serine 286) interacts with substrate. An a divalent metal cation-binding site is contributed by aspartate 313. Asparagine 335 contributes to the substrate binding site.

The protein belongs to the metallo-dependent hydrolases superfamily. Hydantoinase/dihydropyrimidinase family. In terms of assembly, homotetramer. A divalent metal cation is required as a cofactor. Post-translationally, carboxylation allows a single lysine to coordinate two divalent metal cations.

It carries out the reaction D-5-phenylhydantoin + H2O = N-carbamoyl-D-phenylglycine + H(+). Its function is as follows. Catalyzes the stereospecific hydrolysis of the cyclic amide bond of D-hydantoin derivatives with an aromatic side chains at the 5'-position. Has no activity on dihydropyrimidines. The physiological function is unknown. The polypeptide is D-phenylhydantoinase (Escherichia coli O6:K15:H31 (strain 536 / UPEC)).